Reading from the N-terminus, the 41-residue chain is NDDPPISIDLTFHLLRNMIEMARIENEREQAGLNRKYLDEV.

V41 is subject to Valine amide.

The protein belongs to the sauvagine/corticotropin-releasing factor/urotensin I family.

It localises to the secreted. Urotensin is found in the teleost caudal neurosecretory system. It has a suggested role in osmoregulation and as a corticotropin-releasing factor. This Catostomus commersonii (White sucker) protein is Urotensin-1.